A 422-amino-acid polypeptide reads, in one-letter code: Phospho-N-acetylmuramoyl-pentapeptide-transferase (422 aa).

Helical transmembrane passes span 28-48, 71-91, 95-115, 136-156, 211-231, 246-266, 279-299, 313-333, and 399-419; these read LMAI…FINL, VGVP…PCLL, LHNI…SLGF, IIGQ…SPDV, AGWI…SNGA, AIIG…EFAG, LVIF…YNAY, IGGI…IPIL, and KITV…IITL.

Belongs to the glycosyltransferase 4 family. MraY subfamily. Requires Mg(2+) as cofactor.

The protein resides in the cell inner membrane. The catalysed reaction is UDP-N-acetyl-alpha-D-muramoyl-L-alanyl-gamma-D-glutamyl-meso-2,6-diaminopimeloyl-D-alanyl-D-alanine + di-trans,octa-cis-undecaprenyl phosphate = di-trans,octa-cis-undecaprenyl diphospho-N-acetyl-alpha-D-muramoyl-L-alanyl-D-glutamyl-meso-2,6-diaminopimeloyl-D-alanyl-D-alanine + UMP. The protein operates within cell wall biogenesis; peptidoglycan biosynthesis. Catalyzes the initial step of the lipid cycle reactions in the biosynthesis of the cell wall peptidoglycan: transfers peptidoglycan precursor phospho-MurNAc-pentapeptide from UDP-MurNAc-pentapeptide onto the lipid carrier undecaprenyl phosphate, yielding undecaprenyl-pyrophosphoryl-MurNAc-pentapeptide, known as lipid I. The chain is Phospho-N-acetylmuramoyl-pentapeptide-transferase from Bacteroides fragilis (strain ATCC 25285 / DSM 2151 / CCUG 4856 / JCM 11019 / LMG 10263 / NCTC 9343 / Onslow / VPI 2553 / EN-2).